The chain runs to 506 residues: ATP synthase subunit alpha (506 aa).

An ATP-binding site is contributed by 170–177 (GDRQTGKT).

This sequence belongs to the ATPase alpha/beta chains family. F-type ATPases have 2 components, CF(1) - the catalytic core - and CF(0) - the membrane proton channel. CF(1) has five subunits: alpha(3), beta(3), gamma(1), delta(1), epsilon(1). CF(0) has four main subunits: a(1), b(1), b'(1) and c(9-12).

Its subcellular location is the cellular thylakoid membrane. The catalysed reaction is ATP + H2O + 4 H(+)(in) = ADP + phosphate + 5 H(+)(out). Produces ATP from ADP in the presence of a proton gradient across the membrane. The alpha chain is a regulatory subunit. The polypeptide is ATP synthase subunit alpha (Parasynechococcus marenigrum (strain WH8102)).